A 53-amino-acid chain; its full sequence is uncharacterized protein (53 aa).

The chain crosses the membrane as a helical span at residues 24–44 (LMTFIAVNAVLSLILIRAVIL).

The protein resides in the membrane. This is an uncharacterized protein from Methanocaldococcus jannaschii (strain ATCC 43067 / DSM 2661 / JAL-1 / JCM 10045 / NBRC 100440) (Methanococcus jannaschii).